Consider the following 172-residue polypeptide: Adenylate kinase isoenzyme 6 (172 aa).

Positions 13, 15, 16, 17, and 18 each coordinate ATP. Positions 33–56 (NVGDLAREGQLYDGYDEEYGCPIL) are NMPbind. Residues 108–118 (TRGYNEKKLQD) form an LID region. Arg109 provides a ligand contact to ATP.

Belongs to the adenylate kinase family. AK6 subfamily. In terms of assembly, monomer and homodimer. Interacts with small ribosomal subunit protein uS11. Not a structural component of 43S pre-ribosomes, but transiently interacts with them by binding to uS11. Interacts with COIL (via C-terminus).

The protein resides in the cytoplasm. It localises to the nucleus. The protein localises to the nucleoplasm. It is found in the cajal body. The catalysed reaction is AMP + ATP = 2 ADP. The enzyme catalyses ATP + H2O = ADP + phosphate + H(+). Functionally, broad-specificity nucleoside monophosphate (NMP) kinase that catalyzes the reversible transfer of the terminal phosphate group between nucleoside triphosphates and monophosphates. Also has ATPase activity. Involved in the late cytoplasmic maturation steps of the 40S ribosomal particles, specifically 18S rRNA maturation. While NMP activity is not required for ribosome maturation, ATPase activity is. Associates transiently with small ribosomal subunit protein uS11. ATP hydrolysis breaks the interaction with uS11. May temporarily remove uS11 from the ribosome to enable a conformational change of the ribosomal RNA that is needed for the final maturation step of the small ribosomal subunit. Its NMP activity may have a role in nuclear energy homeostasis. May be involved in regulation of Cajal body (CB) formation. The chain is Adenylate kinase isoenzyme 6 from Mus musculus (Mouse).